The chain runs to 190 residues: Peptidyl-prolyl cis-trans isomerase A (190 aa).

The N-terminal stretch at 1 to 23 (MSKRILAAVVTVLSLTAFSPAFA) is a signal peptide. One can recognise a PPIase cyclophilin-type domain in the interval 26–187 (TSTHVLLTTS…KPIVIQSAKI (162 aa)).

Belongs to the cyclophilin-type PPIase family.

The protein resides in the periplasm. The enzyme catalyses [protein]-peptidylproline (omega=180) = [protein]-peptidylproline (omega=0). Functionally, PPIases accelerate the folding of proteins. It catalyzes the cis-trans isomerization of proline imidic peptide bonds in oligopeptides. The sequence is that of Peptidyl-prolyl cis-trans isomerase A (rotA) from Dickeya dadantii (strain 3937) (Erwinia chrysanthemi (strain 3937)).